An 815-amino-acid polypeptide reads, in one-letter code: Putative transcription factor phnE (815 aa).

The tract at residues 522 to 577 (PSRRNSDGSAHSSPSSTPSSSSTSSPLPSPASERPPPLDVVTRPSTGTSTPSSPTL) is disordered. The span at 523–547 (SRRNSDGSAHSSPSSTPSSSSTSSP) shows a compositional bias: low complexity. The span at 548–559 (LPSPASERPPPL) shows a compositional bias: pro residues. A compositionally biased stretch (low complexity) spans 563-577 (TRPSTGTSTPSSPTL).

It localises to the nucleus. Functionally, putative transcription factor that may be involved in the regulation of the expression of the gene cluster that mediates the biosynthesis of phenalenones such as herqueinone, compounds that have been reported to treat tumors, bacterial infections and/or mycoses, and rheumatic diseases. The polypeptide is Putative transcription factor phnE (Penicillium herquei).